The sequence spans 257 residues: Putative phosphatase YkrA (257 aa).

Catalysis depends on Asp9, which acts as the Nucleophile. Mg(2+) is bound at residue Asp9. Position 10 (Ile10) interacts with phosphate. Asp11 provides a ligand contact to Mg(2+). Phosphate contacts are provided by residues 43 to 44 (SG) and Lys183. Asp206 contributes to the Mg(2+) binding site. Residue Asn209 participates in phosphate binding.

The protein belongs to the HAD-like hydrolase superfamily. Cof family. Mg(2+) serves as cofactor.

The protein is Putative phosphatase YkrA (ykrA) of Bacillus subtilis (strain 168).